The chain runs to 419 residues: Tyrosine--tRNA ligase (419 aa).

Tyrosine 34 contributes to the L-tyrosine binding site. Residues 39–48 carry the 'HIGH' region motif; the sequence is PTADSLHLGN. Tyrosine 169 and glutamine 173 together coordinate L-tyrosine. The short motif at 229–233 is the 'KMSKS' region element; the sequence is KFGKS. Lysine 232 contacts ATP. The 67-residue stretch at 353-419 folds into the S4 RNA-binding domain; the sequence is LTLIELLISA…GKKKNFVLTY (67 aa).

Belongs to the class-I aminoacyl-tRNA synthetase family. TyrS type 1 subfamily. As to quaternary structure, homodimer.

The protein resides in the cytoplasm. It carries out the reaction tRNA(Tyr) + L-tyrosine + ATP = L-tyrosyl-tRNA(Tyr) + AMP + diphosphate + H(+). Functionally, catalyzes the attachment of tyrosine to tRNA(Tyr) in a two-step reaction: tyrosine is first activated by ATP to form Tyr-AMP and then transferred to the acceptor end of tRNA(Tyr). This is Tyrosine--tRNA ligase from Lactococcus lactis subsp. cremoris (strain SK11).